Consider the following 219-residue polypeptide: Elongation factor Ts, chloroplastic (219 aa).

Belongs to the EF-Ts family.

It is found in the plastid. The protein localises to the chloroplast. Associates with the EF-Tu.GDP complex and induces the exchange of GDP to GTP. It remains bound to the aminoacyl-tRNA.EF-Tu.GTP complex up to the GTP hydrolysis stage on the ribosome. This Guillardia theta (Cryptophyte) protein is Elongation factor Ts, chloroplastic (tsf).